The following is a 613-amino-acid chain: Cleavage and polyadenylation specificity factor subunit 3-II (613 aa).

Residues 67–72 (HFHMDH) carry the HXHXDH motif motif.

The protein belongs to the metallo-beta-lactamase superfamily. RNA-metabolizing metallo-beta-lactamase-like family. INTS11 subfamily. In terms of assembly, component of the CPSF complex, at least composed of CPSF160, CPSF100, CPSF73-I, CPSF73-II, CPSF30, FY and FIPS5. Interacts with CPSF30, CPSF100, CPSF160 and FY. Highly expressed in senescence leaves, petals, stamens, pollen and late stages of siliques with seeds. Also detected in roots, stems, leaves and seedlings.

Its subcellular location is the nucleus. Component of the cleavage and polyadenylation specificity factor (CPSF) complex that play a key role in pre-mRNA 3'-end formation, recognizing the AAUAAA signal sequence and interacting with poly(A) polymerase and other factors to bring about cleavage and poly(A) addition. May function as mRNA 3'-end-processing endonuclease and also be involved in the histone 3'-end pre-mRNA processing. The protein is Cleavage and polyadenylation specificity factor subunit 3-II (CPSF73-II) of Arabidopsis thaliana (Mouse-ear cress).